A 225-amino-acid chain; its full sequence is Peptidyl-tRNA hydrolase (225 aa).

A tRNA-binding site is contributed by Tyr-14. The Proton acceptor role is filled by His-19. The tRNA site is built by Phe-64, Asn-66, and Asn-112. The tract at residues 187–225 (MQPPKPEKPKGEAKPAAPEAPEAAPDTRSALQRLADRFR) is disordered. Low complexity predominate over residues 200-210 (KPAAPEAPEAA).

It belongs to the PTH family. In terms of assembly, monomer.

The protein resides in the cytoplasm. The catalysed reaction is an N-acyl-L-alpha-aminoacyl-tRNA + H2O = an N-acyl-L-amino acid + a tRNA + H(+). Its function is as follows. Hydrolyzes ribosome-free peptidyl-tRNAs (with 1 or more amino acids incorporated), which drop off the ribosome during protein synthesis, or as a result of ribosome stalling. In terms of biological role, catalyzes the release of premature peptidyl moieties from peptidyl-tRNA molecules trapped in stalled 50S ribosomal subunits, and thus maintains levels of free tRNAs and 50S ribosomes. In Cereibacter sphaeroides (strain ATCC 17025 / ATH 2.4.3) (Rhodobacter sphaeroides), this protein is Peptidyl-tRNA hydrolase.